The chain runs to 284 residues: Shikimate dehydrogenase (NADP(+)) (284 aa).

Residues 23–25 (SLS) and Thr-70 each bind shikimate. Catalysis depends on Lys-74, which acts as the Proton acceptor. An NADP(+)-binding site is contributed by Glu-86. Asn-95 and Asp-111 together coordinate shikimate. NADP(+)-binding positions include 135–139 (GAGGA), 159–164 (NRTPGR), and Ala-227. Residue Tyr-229 coordinates shikimate. Residue Gly-251 participates in NADP(+) binding.

It belongs to the shikimate dehydrogenase family. As to quaternary structure, homodimer.

It catalyses the reaction shikimate + NADP(+) = 3-dehydroshikimate + NADPH + H(+). It participates in metabolic intermediate biosynthesis; chorismate biosynthesis; chorismate from D-erythrose 4-phosphate and phosphoenolpyruvate: step 4/7. Involved in the biosynthesis of the chorismate, which leads to the biosynthesis of aromatic amino acids. Catalyzes the reversible NADPH linked reduction of 3-dehydroshikimate (DHSA) to yield shikimate (SA). This Rubrobacter xylanophilus (strain DSM 9941 / JCM 11954 / NBRC 16129 / PRD-1) protein is Shikimate dehydrogenase (NADP(+)).